Consider the following 222-residue polypeptide: Peptide methionine sulfoxide reductase MsrA 2 (222 aa).

C56 is an active-site residue.

This sequence belongs to the MsrA Met sulfoxide reductase family.

The catalysed reaction is L-methionyl-[protein] + [thioredoxin]-disulfide + H2O = L-methionyl-(S)-S-oxide-[protein] + [thioredoxin]-dithiol. It catalyses the reaction [thioredoxin]-disulfide + L-methionine + H2O = L-methionine (S)-S-oxide + [thioredoxin]-dithiol. In terms of biological role, has an important function as a repair enzyme for proteins that have been inactivated by oxidation. Catalyzes the reversible oxidation-reduction of methionine sulfoxide in proteins to methionine. This chain is Peptide methionine sulfoxide reductase MsrA 2 (msrA2), found in Nostoc sp. (strain PCC 7120 / SAG 25.82 / UTEX 2576).